The sequence spans 121 residues: Ribosome-binding factor A (121 aa).

Belongs to the RbfA family. As to quaternary structure, monomer. Binds 30S ribosomal subunits, but not 50S ribosomal subunits or 70S ribosomes.

Its subcellular location is the cytoplasm. Functionally, one of several proteins that assist in the late maturation steps of the functional core of the 30S ribosomal subunit. Associates with free 30S ribosomal subunits (but not with 30S subunits that are part of 70S ribosomes or polysomes). Required for efficient processing of 16S rRNA. May interact with the 5'-terminal helix region of 16S rRNA. This is Ribosome-binding factor A from Paraburkholderia xenovorans (strain LB400).